The chain runs to 211 residues: ATP phosphoribosyltransferase (211 aa).

It belongs to the ATP phosphoribosyltransferase family. Short subfamily. In terms of assembly, heteromultimer composed of HisG and HisZ subunits.

It localises to the cytoplasm. It carries out the reaction 1-(5-phospho-beta-D-ribosyl)-ATP + diphosphate = 5-phospho-alpha-D-ribose 1-diphosphate + ATP. Its pathway is amino-acid biosynthesis; L-histidine biosynthesis; L-histidine from 5-phospho-alpha-D-ribose 1-diphosphate: step 1/9. Its function is as follows. Catalyzes the condensation of ATP and 5-phosphoribose 1-diphosphate to form N'-(5'-phosphoribosyl)-ATP (PR-ATP). Has a crucial role in the pathway because the rate of histidine biosynthesis seems to be controlled primarily by regulation of HisG enzymatic activity. In Pseudomonas savastanoi pv. phaseolicola (strain 1448A / Race 6) (Pseudomonas syringae pv. phaseolicola (strain 1448A / Race 6)), this protein is ATP phosphoribosyltransferase.